Consider the following 245-residue polypeptide: Small ribosomal subunit protein uS2 (245 aa).

The protein belongs to the universal ribosomal protein uS2 family.

The sequence is that of Small ribosomal subunit protein uS2 from Pseudomonas fluorescens (strain Pf0-1).